The following is a 296-amino-acid chain: MSYTKDNDKLYRYLFQNRAVRGEWVRLNDTFTETLNTHQYPKAVQNLLGEMLVATSLLTAIMKFEGTITVQIQGDGPLKLAVVNGNEKQQLRALARTQAEIADNASLSEMIGNGVLVISIMPNDGERYQGVIALDKPTIRECLEDYFIRSEQLQTHLVIRTGEYEGKAVAGGLLLQIMPDGTGMPEDFEHLMTLAETVKDEELFGLEAEELLFRLYHEEQVEVYPPQETEFYCGCSRERSGNAILLLPMEEIDEMLAEKNGVIDMQCECCGTQYFFDKNAIMEFKQEADKLNQLGL.

2 disulfide bridges follow: Cys-233–Cys-235 and Cys-267–Cys-270.

The protein belongs to the HSP33 family. Under oxidizing conditions two disulfide bonds are formed involving the reactive cysteines. Under reducing conditions zinc is bound to the reactive cysteines and the protein is inactive.

It is found in the cytoplasm. In terms of biological role, redox regulated molecular chaperone. Protects both thermally unfolding and oxidatively damaged proteins from irreversible aggregation. Plays an important role in the bacterial defense system toward oxidative stress. This Actinobacillus pleuropneumoniae serotype 7 (strain AP76) protein is 33 kDa chaperonin.